The following is a 253-amino-acid chain: MAGGGSRMKKSCACCKRYLEHLGGKMSCFLIRMTTDSMHSMIIPDRFVNHFGGKIPGTIKLESPNGILYVVEVTECMNKTVLQCGWEAFVDAHHIKVGDSLLFRHIENSCFEVMILDSDGSENVSLKSNRNGVSDESQESEDSEGPAGPPYILSWKSKSRLSSLQKKIIKEKVRSIQSEVPIYVAIMNKSNIGLTSSPCQLELGARYAAAVHLPDRRQAVVLQRGAAMGHRDADQERQMHHQAVPDQWLEQDS.

The TF-B3 DNA-binding region spans 26 to 119; that stretch reads MSCFLIRMTT…CFEVMILDSD (94 aa). Disordered regions lie at residues 126 to 150 and 230 to 253; these read LKSNRNGVSDESQESEDSEGPAGPP and HRDADQERQMHHQAVPDQWLEQDS. Residues 230 to 239 are compositionally biased toward basic and acidic residues; sequence HRDADQERQM.

It is found in the nucleus. The protein is Putative B3 domain-containing protein Os03g0619850 of Oryza sativa subsp. japonica (Rice).